The chain runs to 54 residues: Zinc-containing ferredoxin A (54 aa).

Residues 1–21 (GIDPNYRTSRPEVGTHEGHKV) form a disordered region. The segment at 1–36 (GIDPNYRTSRPEVGTHEGHKVYGPVENPKVLGIHGA) is N-terminal extension. Positions 9–20 (SRPEVGTHEGHK) are enriched in basic and acidic residues. Zn(2+) is bound by residues His-16 and His-19. Lys-29 carries the post-translational modification N6-methyllysine. Residue His-34 coordinates Zn(2+). The 20-residue stretch at 35-54 (GAIVGVDFDLCIADGSCINA) folds into the 4Fe-4S ferredoxin-type 1 domain. The [3Fe-4S] cluster site is built by Cys-45 and Cys-51.

[3Fe-4S] cluster serves as cofactor. It depends on [4Fe-4S] cluster as a cofactor. The cofactor is Zn(2+).

Ferredoxins are iron-sulfur proteins that transfer electrons in a wide variety of metabolic reactions. This Sulfuracidifex metallicus (Sulfolobus metallicus) protein is Zinc-containing ferredoxin A (zfx).